The following is a 199-amino-acid chain: Glycerol-3-phosphate acyltransferase (199 aa).

The next 5 helical transmembrane spans lie at Y3–P23, V50–F70, I77–L97, G110–I130, and Y136–N156.

Belongs to the PlsY family. As to quaternary structure, probably interacts with PlsX.

It is found in the cell inner membrane. The catalysed reaction is an acyl phosphate + sn-glycerol 3-phosphate = a 1-acyl-sn-glycero-3-phosphate + phosphate. It participates in lipid metabolism; phospholipid metabolism. Functionally, catalyzes the transfer of an acyl group from acyl-phosphate (acyl-PO(4)) to glycerol-3-phosphate (G3P) to form lysophosphatidic acid (LPA). This enzyme utilizes acyl-phosphate as fatty acyl donor, but not acyl-CoA or acyl-ACP. The sequence is that of Glycerol-3-phosphate acyltransferase from Pseudothermotoga lettingae (strain ATCC BAA-301 / DSM 14385 / NBRC 107922 / TMO) (Thermotoga lettingae).